Reading from the N-terminus, the 324-residue chain is Aspartate carbamoyltransferase catalytic subunit (324 aa).

The carbamoyl phosphate site is built by Arg-65 and Thr-66. Lys-93 is an L-aspartate binding site. Residues Arg-115, His-145, and Gln-148 each contribute to the carbamoyl phosphate site. Positions 178 and 233 each coordinate L-aspartate. Residues Gly-274 and Pro-275 each contribute to the carbamoyl phosphate site.

This sequence belongs to the aspartate/ornithine carbamoyltransferase superfamily. ATCase family. In terms of assembly, heterododecamer (2C3:3R2) of six catalytic PyrB chains organized as two trimers (C3), and six regulatory PyrI chains organized as three dimers (R2).

It catalyses the reaction carbamoyl phosphate + L-aspartate = N-carbamoyl-L-aspartate + phosphate + H(+). It participates in pyrimidine metabolism; UMP biosynthesis via de novo pathway; (S)-dihydroorotate from bicarbonate: step 2/3. In terms of biological role, catalyzes the condensation of carbamoyl phosphate and aspartate to form carbamoyl aspartate and inorganic phosphate, the committed step in the de novo pyrimidine nucleotide biosynthesis pathway. In Nitrosococcus oceani (strain ATCC 19707 / BCRC 17464 / JCM 30415 / NCIMB 11848 / C-107), this protein is Aspartate carbamoyltransferase catalytic subunit.